Here is a 536-residue protein sequence, read N- to C-terminus: Probable cytochrome P450 12a5, mitochondrial (536 aa).

Heme is bound at residue Cys-482.

Belongs to the cytochrome P450 family. Heme serves as cofactor.

The protein localises to the mitochondrion membrane. The chain is Probable cytochrome P450 12a5, mitochondrial (Cyp12a5) from Drosophila melanogaster (Fruit fly).